Reading from the N-terminus, the 346-residue chain is Serine/threonine-protein phosphatase PP1(5.9) (346 aa).

Residues aspartate 102, histidine 104, aspartate 130, and asparagine 162 each contribute to the Mn(2+) site. Histidine 163 acts as the Proton donor in catalysis. 2 residues coordinate Mn(2+): histidine 211 and histidine 287.

It belongs to the PPP phosphatase family. PP-1 subfamily. It depends on Mn(2+) as a cofactor.

The enzyme catalyses O-phospho-L-seryl-[protein] + H2O = L-seryl-[protein] + phosphate. The catalysed reaction is O-phospho-L-threonyl-[protein] + H2O = L-threonyl-[protein] + phosphate. The sequence is that of Serine/threonine-protein phosphatase PP1(5.9) from Trypanosoma brucei brucei.